The chain runs to 413 residues: Multifunctional CCA protein (413 aa).

Positions 8 and 11 each coordinate ATP. Residues Gly8 and Arg11 each coordinate CTP. Residues Asp21 and Asp23 each coordinate Mg(2+). 3 residues coordinate ATP: Arg91, Arg137, and Arg140. Residues Arg91, Arg137, and Arg140 each coordinate CTP. In terms of domain architecture, HD spans Thr225 to Tyr326.

The protein belongs to the tRNA nucleotidyltransferase/poly(A) polymerase family. Bacterial CCA-adding enzyme type 1 subfamily. Monomer. Can also form homodimers and oligomers. Requires Mg(2+) as cofactor. Ni(2+) is required as a cofactor.

It catalyses the reaction a tRNA precursor + 2 CTP + ATP = a tRNA with a 3' CCA end + 3 diphosphate. The enzyme catalyses a tRNA with a 3' CCA end + 2 CTP + ATP = a tRNA with a 3' CCACCA end + 3 diphosphate. Functionally, catalyzes the addition and repair of the essential 3'-terminal CCA sequence in tRNAs without using a nucleic acid template. Adds these three nucleotides in the order of C, C, and A to the tRNA nucleotide-73, using CTP and ATP as substrates and producing inorganic pyrophosphate. tRNA 3'-terminal CCA addition is required both for tRNA processing and repair. Also involved in tRNA surveillance by mediating tandem CCA addition to generate a CCACCA at the 3' terminus of unstable tRNAs. While stable tRNAs receive only 3'-terminal CCA, unstable tRNAs are marked with CCACCA and rapidly degraded. The protein is Multifunctional CCA protein of Nitrosospira multiformis (strain ATCC 25196 / NCIMB 11849 / C 71).